The chain runs to 459 residues: F-box protein At1g47340 (459 aa).

Positions 31–76 (FMVSVSLPKELILEILKRLPAKSVKRFHCVSKQWASMLSCPHFREL) constitute an F-box domain. The disordered stretch occupies residues 434–459 (AKIEWEEEEEEDEDEDQEKEEEDQWS). A compositionally biased stretch (acidic residues) spans 438-459 (WEEEEEEDEDEDQEKEEEDQWS).

The chain is F-box protein At1g47340 from Arabidopsis thaliana (Mouse-ear cress).